A 457-amino-acid polypeptide reads, in one-letter code: Multidrug resistance protein MdtK (457 aa).

12 consecutive transmembrane segments (helical) span residues 11 to 31 (LLAL…MGFV), 53 to 73 (IWLP…PVVA), 93 to 113 (WLAG…GYII), 127 to 147 (AVGY…FQVA), 160 to 180 (GMVM…IFIY), 191 to 211 (VGCG…MLWW), 243 to 263 (LPIA…ALLV), 276 to 296 (IALN…AAVT), 316 to 336 (RTGV…TVLM), 357 to 377 (LMLL…GSGI), 387 to 407 (IFFI…YLLA), and 418 to 438 (PAGF…MMML).

The protein belongs to the multi antimicrobial extrusion (MATE) (TC 2.A.66.1) family. MdtK subfamily.

It is found in the cell inner membrane. Its function is as follows. Multidrug efflux pump that functions probably as a Na(+)/drug antiporter. This is Multidrug resistance protein MdtK from Klebsiella pneumoniae subsp. pneumoniae (strain ATCC 700721 / MGH 78578).